A 135-amino-acid chain; its full sequence is UPF0102 protein Aave_0630 (135 aa).

A disordered region spans residues 1–21 (MGILEKKTAGPGGAARKTTTR).

It belongs to the UPF0102 family.

This Paracidovorax citrulli (strain AAC00-1) (Acidovorax citrulli) protein is UPF0102 protein Aave_0630.